Here is a 442-residue protein sequence, read N- to C-terminus: Serine--tRNA ligase (442 aa).

249 to 251 (TSE) contributes to the L-serine binding site. Residue 280-282 (RSE) participates in ATP binding. Glu-303 serves as a coordination point for L-serine. Residue 367–370 (EISS) coordinates ATP. Residue Ser-402 participates in L-serine binding.

The protein belongs to the class-II aminoacyl-tRNA synthetase family. Type-1 seryl-tRNA synthetase subfamily. As to quaternary structure, homodimer. The tRNA molecule binds across the dimer.

The protein localises to the cytoplasm. It carries out the reaction tRNA(Ser) + L-serine + ATP = L-seryl-tRNA(Ser) + AMP + diphosphate + H(+). The enzyme catalyses tRNA(Sec) + L-serine + ATP = L-seryl-tRNA(Sec) + AMP + diphosphate + H(+). The protein operates within aminoacyl-tRNA biosynthesis; selenocysteinyl-tRNA(Sec) biosynthesis; L-seryl-tRNA(Sec) from L-serine and tRNA(Sec): step 1/1. In terms of biological role, catalyzes the attachment of serine to tRNA(Ser). Is also able to aminoacylate tRNA(Sec) with serine, to form the misacylated tRNA L-seryl-tRNA(Sec), which will be further converted into selenocysteinyl-tRNA(Sec). This Acidovorax sp. (strain JS42) protein is Serine--tRNA ligase.